The chain runs to 212 residues: Pyrrolidone-carboxylate peptidase (212 aa).

Catalysis depends on residues Glu-80, Cys-143, and His-165.

It belongs to the peptidase C15 family. As to quaternary structure, homotetramer.

The protein localises to the cytoplasm. The catalysed reaction is Release of an N-terminal pyroglutamyl group from a polypeptide, the second amino acid generally not being Pro.. Functionally, removes 5-oxoproline from various penultimate amino acid residues except L-proline. The chain is Pyrrolidone-carboxylate peptidase from Vibrio parahaemolyticus serotype O3:K6 (strain RIMD 2210633).